The following is a 239-amino-acid chain: Pentatricopeptide repeat-containing protein DWY1, chloroplastic (239 aa).

A chloroplast-targeting transit peptide spans 1–35; the sequence is MALEAAFSMSFCSFSVPKAIFCERETSSFQRITSR. Disordered regions lie at residues 40 to 59 and 101 to 122; these read AGES…KETS and HISP…SGGE. The span at 111–122 shows a compositional bias: basic and acidic residues; it reads VRGDKPEISGGE. Positions 113 to 144 are type E(+) motif; the sequence is GDKPEISGGEKKAIVDRSKAYVKLKSLGKEVR. The segment at 145-239 is type DYW motif; that stretch reads DAGYVPETKY…DGNCSCGDYW (95 aa).

It belongs to the PPR family. PCMP-H subfamily. In terms of assembly, interacts with CRR4. It depends on Zn(2+) as a cofactor.

The protein localises to the plastid. It localises to the chloroplast. Functionally, plays a major role in single RNA editing events in chloroplasts. Acts as a site-recognition transacting factor involved in the edition of the site 1 of ndhD (ndhD-1 site corresponding to cytidine-2), which is a plastid-encoded subunit of the NADH-plastoquinone oxidoreductase. The interaction with CRR4 is required for its function in editing the ndhD-1 site. The sequence is that of Pentatricopeptide repeat-containing protein DWY1, chloroplastic from Arabidopsis thaliana (Mouse-ear cress).